The sequence spans 309 residues: Taste receptor type 2 member 45 (309 aa).

A topological domain (extracellular) is located at residue M1. A helical transmembrane segment spans residues 2–22 (ITFLPIIFSILVVVTFVIGNF). Topologically, residues 23 to 55 (ANGFIALVNSTEWVKRQKISFADQIVTALAVSR) are cytoplasmic. Residues 56–76 (VGLLWVLLLNWYSTVLNPAFY) traverse the membrane as a helical segment. The Extracellular segment spans residues 77 to 98 (SVELRTTAYNIWAVTGHFSNWL). A helical transmembrane segment spans residues 99 to 119 (ATSLSIFYLLKIANFSNLIFL). The Cytoplasmic portion of the chain corresponds to 120-126 (HLKRRVK). A helical membrane pass occupies residues 127-147 (SVILVMLLGPLLFLACHLFVV). The Extracellular segment spans residues 148-178 (NMNQIVWTKEYEGNMTWKIKLRRAMYLSDTT). N161 carries an N-linked (GlcNAc...) asparagine glycan. A helical transmembrane segment spans residues 179-199 (VTMLANLVPFTVTLISFLLLV). Residues 200-229 (CSLCEHLKKMQLHGKGSQDPSTKVHIKALQ) are Cytoplasmic-facing. A helical transmembrane segment spans residues 230 to 250 (TVISFLLLCAIYFVSVIISVW). Topologically, residues 251–259 (SFKNLENKP) are extracellular. The chain crosses the membrane as a helical span at residues 260–280 (VFMFCQAIGFSCSSAHPFILI). At 281-309 (WGNKKLKQPFLSVLWQMRYWVKGEKPSSS) the chain is on the cytoplasmic side.

The protein belongs to the G-protein coupled receptor T2R family.

The protein resides in the membrane. Functionally, receptor that may play a role in the perception of bitterness and is gustducin-linked. May play a role in sensing the chemical composition of the gastrointestinal content. The activity of this receptor may stimulate alpha gustducin, mediate PLC-beta-2 activation and lead to the gating of TRPM5. The polypeptide is Taste receptor type 2 member 45 (TAS2R45) (Pan paniscus (Pygmy chimpanzee)).